Reading from the N-terminus, the 73-residue chain is MANKEELIEFEGVVTETLPNTMFRVRLENGHEVIAHISGKMRKHYIRILTGDSVKVEMTPYDLTKGRITYRAR.

Residues 1–73 form the S1-like domain; the sequence is MANKEELIEF…TKGRITYRAR (73 aa).

Belongs to the IF-1 family. In terms of assembly, component of the 30S ribosomal translation pre-initiation complex which assembles on the 30S ribosome in the order IF-2 and IF-3, IF-1 and N-formylmethionyl-tRNA(fMet); mRNA recruitment can occur at any time during PIC assembly.

Its subcellular location is the cytoplasm. In terms of biological role, one of the essential components for the initiation of protein synthesis. Stabilizes the binding of IF-2 and IF-3 on the 30S subunit to which N-formylmethionyl-tRNA(fMet) subsequently binds. Helps modulate mRNA selection, yielding the 30S pre-initiation complex (PIC). Upon addition of the 50S ribosomal subunit IF-1, IF-2 and IF-3 are released leaving the mature 70S translation initiation complex. The protein is Translation initiation factor IF-1 of Acinetobacter baumannii (strain ATCC 17978 / DSM 105126 / CIP 53.77 / LMG 1025 / NCDC KC755 / 5377).